Here is a 456-residue protein sequence, read N- to C-terminus: RUN domain-containing protein 3B (456 aa).

Positions 1-26 (MASRSLGGLSGIRGGGGGGGKKSLSS) are disordered. Residues 8–21 (GLSGIRGGGGGGGK) are compositionally biased toward gly residues. Arg13 carries the omega-N-methylarginine modification. The 133-residue stretch at 57–189 (DDSSPEFNNF…IDFSFCLKGE (133 aa)) folds into the RUN domain. 2 positions are modified to phosphoserine: Ser215 and Ser216. A coiled-coil region spans residues 300-325 (AHKLEKEQLEYIIVELQDQLTVLKNN). Residues 382–405 (SLSQTSLDPGQSQEGDGKQDTLNI) are disordered.

The protein belongs to the RUNDC3 family. In terms of assembly, interacts with RAP2A.

The polypeptide is RUN domain-containing protein 3B (RUNDC3B) (Macaca fascicularis (Crab-eating macaque)).